A 569-amino-acid polypeptide reads, in one-letter code: Potassium-transporting ATPase potassium-binding subunit (569 aa).

Transmembrane regions (helical) follow at residues 3–23, 64–84, 133–153, 179–199, 255–275, 281–301, 375–395, 421–441, 497–517, and 535–555; these read TEILGVALQILLLLVISYPLG, FLKSLLIINVFWFFWGMILLV, FVIMLFQFITAATGMAAMAGI, ILFPMSLIVGFILIIQGTPMG, IVECWSILIIPMALVFALGFY, LGYVIYGVMLFAYLLGVFCNV, FGGVGVGFMNYYAFLIIAVFI, IVSLAHPFVILIFTAISSYVW, LALIISRYLPIVGQVAIAGLL, and VTFGVMTFFVIVIVAALSFFP.

It belongs to the KdpA family. In terms of assembly, the system is composed of three essential subunits: KdpA, KdpB and KdpC.

The protein resides in the cell inner membrane. Functionally, part of the high-affinity ATP-driven potassium transport (or Kdp) system, which catalyzes the hydrolysis of ATP coupled with the electrogenic transport of potassium into the cytoplasm. This subunit binds the periplasmic potassium ions and delivers the ions to the membrane domain of KdpB through an intramembrane tunnel. This is Potassium-transporting ATPase potassium-binding subunit from Parabacteroides distasonis (strain ATCC 8503 / DSM 20701 / CIP 104284 / JCM 5825 / NCTC 11152).